The primary structure comprises 601 residues: Deuterosome assembly protein 1 (601 aa).

Coiled-coil stretches lie at residues C14 to T59, T86 to R197, and I226 to R278. 2 disordered regions span residues M115–L135 and Q188–S213. Residues H121 to T131 show a composition bias toward basic and acidic residues. Residues D307–K326 form a disordered region. The stretch at H340 to K397 forms a coiled coil. A Phosphoserine modification is found at S544. The stretch at A555–E586 forms a coiled coil.

This sequence belongs to the CEP63 family. In terms of assembly, interacts with CEP152; the interaction is mutually exclusive with CEP63.

It is found in the cytoplasm. In terms of biological role, key structural component of the deuterosome, a structure that promotes de novo centriole amplification in multiciliated cells. Deuterosome-mediated centriole amplification occurs in terminally differentiated multiciliated cells and can generate more than 100 centrioles. Probably sufficient for the specification and formation of the deuterosome inner core. Interacts with CEP152 and recruits PLK4 to activate centriole biogenesis. The chain is Deuterosome assembly protein 1 from Rattus norvegicus (Rat).